The chain runs to 276 residues: Rhomboid protease GlpG (276 aa).

A run of 6 helical transmembrane segments spans residues 94–114, 142–162, 169–189, 192–212, 229–249, and 250–270; these read GPVT…MQIL, ALMH…WYLG, LGSG…GYVQ, FSGP…GYVW, LIIF…GMSM, and ANGA…VDSL. The Nucleophile role is filled by Ser201. His254 is a catalytic residue.

This sequence belongs to the peptidase S54 family.

It localises to the cell inner membrane. It carries out the reaction Cleaves type-1 transmembrane domains using a catalytic dyad composed of serine and histidine that are contributed by different transmembrane domains.. Functionally, rhomboid-type serine protease that catalyzes intramembrane proteolysis. In Escherichia coli O7:K1 (strain IAI39 / ExPEC), this protein is Rhomboid protease GlpG.